Consider the following 263-residue polypeptide: Tryptophan synthase alpha chain (263 aa).

Active-site proton acceptor residues include Glu-46 and Asp-57.

It belongs to the TrpA family. In terms of assembly, tetramer of two alpha and two beta chains.

It catalyses the reaction (1S,2R)-1-C-(indol-3-yl)glycerol 3-phosphate + L-serine = D-glyceraldehyde 3-phosphate + L-tryptophan + H2O. Its pathway is amino-acid biosynthesis; L-tryptophan biosynthesis; L-tryptophan from chorismate: step 5/5. Its function is as follows. The alpha subunit is responsible for the aldol cleavage of indoleglycerol phosphate to indole and glyceraldehyde 3-phosphate. The sequence is that of Tryptophan synthase alpha chain from Bacteroides fragilis (strain ATCC 25285 / DSM 2151 / CCUG 4856 / JCM 11019 / LMG 10263 / NCTC 9343 / Onslow / VPI 2553 / EN-2).